The chain runs to 304 residues: Aspartate carbamoyltransferase catalytic subunit (304 aa).

Residues arginine 57 and threonine 58 each contribute to the carbamoyl phosphate site. Lysine 85 contributes to the L-aspartate binding site. The carbamoyl phosphate site is built by arginine 107, histidine 134, and glutamine 137. Positions 167 and 216 each coordinate L-aspartate. Carbamoyl phosphate is bound by residues alanine 260 and proline 261.

This sequence belongs to the aspartate/ornithine carbamoyltransferase superfamily. ATCase family. As to quaternary structure, heterododecamer (2C3:3R2) of six catalytic PyrB chains organized as two trimers (C3), and six regulatory PyrI chains organized as three dimers (R2).

It carries out the reaction carbamoyl phosphate + L-aspartate = N-carbamoyl-L-aspartate + phosphate + H(+). It functions in the pathway pyrimidine metabolism; UMP biosynthesis via de novo pathway; (S)-dihydroorotate from bicarbonate: step 2/3. Functionally, catalyzes the condensation of carbamoyl phosphate and aspartate to form carbamoyl aspartate and inorganic phosphate, the committed step in the de novo pyrimidine nucleotide biosynthesis pathway. The polypeptide is Aspartate carbamoyltransferase catalytic subunit (Fusobacterium nucleatum subsp. nucleatum (strain ATCC 25586 / DSM 15643 / BCRC 10681 / CIP 101130 / JCM 8532 / KCTC 2640 / LMG 13131 / VPI 4355)).